A 445-amino-acid chain; its full sequence is Trigger factor (445 aa).

The region spanning 162–247 is the PPIase FKBP-type domain; the sequence is GDQVTIDAIG…IKAVHTAEPT (86 aa).

This sequence belongs to the FKBP-type PPIase family. Tig subfamily.

It localises to the cytoplasm. It catalyses the reaction [protein]-peptidylproline (omega=180) = [protein]-peptidylproline (omega=0). In terms of biological role, involved in protein export. Acts as a chaperone by maintaining the newly synthesized protein in an open conformation. Functions as a peptidyl-prolyl cis-trans isomerase. The chain is Trigger factor from Rickettsia peacockii (strain Rustic).